Here is a 95-residue protein sequence, read N- to C-terminus: Aspartyl/glutamyl-tRNA(Asn/Gln) amidotransferase subunit C (95 aa).

It belongs to the GatC family. Heterotrimer of A, B and C subunits.

It carries out the reaction L-glutamyl-tRNA(Gln) + L-glutamine + ATP + H2O = L-glutaminyl-tRNA(Gln) + L-glutamate + ADP + phosphate + H(+). It catalyses the reaction L-aspartyl-tRNA(Asn) + L-glutamine + ATP + H2O = L-asparaginyl-tRNA(Asn) + L-glutamate + ADP + phosphate + 2 H(+). In terms of biological role, allows the formation of correctly charged Asn-tRNA(Asn) or Gln-tRNA(Gln) through the transamidation of misacylated Asp-tRNA(Asn) or Glu-tRNA(Gln) in organisms which lack either or both of asparaginyl-tRNA or glutaminyl-tRNA synthetases. The reaction takes place in the presence of glutamine and ATP through an activated phospho-Asp-tRNA(Asn) or phospho-Glu-tRNA(Gln). This Geobacter sulfurreducens (strain ATCC 51573 / DSM 12127 / PCA) protein is Aspartyl/glutamyl-tRNA(Asn/Gln) amidotransferase subunit C.